We begin with the raw amino-acid sequence, 520 residues long: Succinyl-CoA:3-ketoacid coenzyme A transferase 2A, mitochondrial (520 aa).

A mitochondrion-targeting transit peptide spans 1–39; sequence MAALRLLAWALPRGVSALRPPPALPHRLIRRYVSDRSGS. The segment at 280–299 is disordered; the sequence is ERLTTRDSKPAPGSKDNDPS. Residue E342 is the 5-glutamyl coenzyme A thioester intermediate of the active site.

This sequence belongs to the 3-oxoacid CoA-transferase family. Homodimer.

Its subcellular location is the mitochondrion. The enzyme catalyses a 3-oxo acid + succinyl-CoA = a 3-oxoacyl-CoA + succinate. Its pathway is ketone metabolism; succinyl-CoA degradation; acetoacetyl-CoA from succinyl-CoA: step 1/1. Functionally, key enzyme for ketone body catabolism. Transfers the CoA moiety from succinate to acetoacetate. Formation of the enzyme-CoA intermediate proceeds via an unstable anhydride species formed between the carboxylate groups of the enzyme and substrate. Probably play and important roles in the energy metabolism of spermatozoa. This chain is Succinyl-CoA:3-ketoacid coenzyme A transferase 2A, mitochondrial (Oxct2a), found in Mus musculus (Mouse).